The following is a 248-amino-acid chain: Triosephosphate isomerase (248 aa).

9–11 (NWK) contacts substrate. His-92 functions as the Electrophile in the catalytic mechanism. Glu-164 (proton acceptor) is an active-site residue. Residues Gly-170, Ser-209, and 230–231 (GG) each bind substrate.

It belongs to the triosephosphate isomerase family. Homodimer.

Its subcellular location is the cytoplasm. It catalyses the reaction D-glyceraldehyde 3-phosphate = dihydroxyacetone phosphate. The protein operates within carbohydrate biosynthesis; gluconeogenesis. It functions in the pathway carbohydrate degradation; glycolysis; D-glyceraldehyde 3-phosphate from glycerone phosphate: step 1/1. Involved in the gluconeogenesis. Catalyzes stereospecifically the conversion of dihydroxyacetone phosphate (DHAP) to D-glyceraldehyde-3-phosphate (G3P). The chain is Triosephosphate isomerase from Thiobacillus denitrificans (strain ATCC 25259 / T1).